Consider the following 174-residue polypeptide: NADH-quinone oxidoreductase subunit B (174 aa).

Cysteine 51, cysteine 52, cysteine 116, and cysteine 146 together coordinate [4Fe-4S] cluster.

It belongs to the complex I 20 kDa subunit family. In terms of assembly, NDH-1 is composed of 14 different subunits. Subunits NuoB, C, D, E, F, and G constitute the peripheral sector of the complex. Requires [4Fe-4S] cluster as cofactor.

It localises to the cell inner membrane. It catalyses the reaction a quinone + NADH + 5 H(+)(in) = a quinol + NAD(+) + 4 H(+)(out). NDH-1 shuttles electrons from NADH, via FMN and iron-sulfur (Fe-S) centers, to quinones in the respiratory chain. The immediate electron acceptor for the enzyme in this species is believed to be ubiquinone. Couples the redox reaction to proton translocation (for every two electrons transferred, four hydrogen ions are translocated across the cytoplasmic membrane), and thus conserves the redox energy in a proton gradient. This is NADH-quinone oxidoreductase subunit B from Anaplasma phagocytophilum (strain HZ).